A 211-amino-acid polypeptide reads, in one-letter code: FMN-dependent NADH:quinone oxidoreductase (211 aa).

Position 17–19 (17–19 (SYS)) interacts with FMN.

This sequence belongs to the azoreductase type 1 family. As to quaternary structure, homodimer. The cofactor is FMN.

It carries out the reaction 2 a quinone + NADH + H(+) = 2 a 1,4-benzosemiquinone + NAD(+). The enzyme catalyses N,N-dimethyl-1,4-phenylenediamine + anthranilate + 2 NAD(+) = 2-(4-dimethylaminophenyl)diazenylbenzoate + 2 NADH + 2 H(+). Quinone reductase that provides resistance to thiol-specific stress caused by electrophilic quinones. Functionally, also exhibits azoreductase activity. Catalyzes the reductive cleavage of the azo bond in aromatic azo compounds to the corresponding amines. This Bacillus velezensis (strain DSM 23117 / BGSC 10A6 / LMG 26770 / FZB42) (Bacillus amyloliquefaciens subsp. plantarum) protein is FMN-dependent NADH:quinone oxidoreductase.